The following is a 257-amino-acid chain: 8-demethyl-8-aminoriboflavin-5'-phosphate synthase (257 aa).

Residues 11 to 13, 19 to 21, 91 to 94, 132 to 136, and tyrosine 240 each bind FMN; these read TLR, SQT, ITLN, and CGNED.

It belongs to the SsuE family. Homotetramer.

It catalyses the reaction FMN + L-glutamate + 3 A + O2 + H2O = 8-amino-8-demethylriboflavin 5'-phosphate + 2-oxoglutarate + 3 AH2 + CO2 + H(+). Its pathway is antibiotic biosynthesis. In terms of biological role, involved in the biosynthesis of the riboflavin analog antibiotic roseoflavin (3,8-dimethylamino-riboflavin). Catalyzes the site-specific substitution of the C-8 methyl group of riboflavin-5'-phosphate (FMN) by an amino group to yield 8-amino-8-demethylriboflavin 5'-phosphate, via a combined oxidation, decarboxylation and transamination reaction. The catalysis is initiated by an oxidation step in which the C-8 methyl group on the dimethylbenzene ring of FMN is converted to a formyl group to yield the 8-demethyl-8-formylriboflavin-5'-phosphate (OHC-RP) intermediate. In the presence of thiamine, the formyl group is oxidized into a carboxyl group to yield the 8-demethyl-8-carboxyriboflavin-5'-phosphate (HO2C-RP) intermediate. Finally, in the presence of L-glutamate as an amino donor, decarboxylation and aminotransfer occur, resulting in production of 8-demethyl-8-aminoriboflavin-5'-phosphate. Addition of NAD (but not NADP) to the reaction increases the yield 1.7-fold. The reaction also proceeds without the addition of any electron acceptor, and it is possible that molecular oxygen serves this role. The protein is 8-demethyl-8-aminoriboflavin-5'-phosphate synthase of Streptomyces davaonensis (strain DSM 101723 / JCM 4913 / KCC S-0913 / 768).